A 537-amino-acid polypeptide reads, in one-letter code: Ataxin-10 homolog (537 aa).

Belongs to the ataxin-10 family.

The protein resides in the cytoplasm. In terms of biological role, may play a role in the regulation of cytokinesis. This Kluyveromyces lactis (strain ATCC 8585 / CBS 2359 / DSM 70799 / NBRC 1267 / NRRL Y-1140 / WM37) (Yeast) protein is Ataxin-10 homolog (CTR86).